The chain runs to 219 residues: ATP-dependent dethiobiotin synthetase BioD (219 aa).

Glycine 12–isoleucine 17 provides a ligand contact to ATP. Threonine 16 is a binding site for Mg(2+). Residue lysine 32 is part of the active site. Residues aspartate 43 and glutamate 96–glycine 99 each bind ATP. Residues aspartate 43 and glutamate 96 each contribute to the Mg(2+) site.

Belongs to the dethiobiotin synthetase family. Homodimer. The cofactor is Mg(2+).

It localises to the cytoplasm. It catalyses the reaction (7R,8S)-7,8-diammoniononanoate + CO2 + ATP = (4R,5S)-dethiobiotin + ADP + phosphate + 3 H(+). It participates in cofactor biosynthesis; biotin biosynthesis; biotin from 7,8-diaminononanoate: step 1/2. Catalyzes a mechanistically unusual reaction, the ATP-dependent insertion of CO2 between the N7 and N8 nitrogen atoms of 7,8-diaminopelargonic acid (DAPA, also called 7,8-diammoniononanoate) to form a ureido ring. The sequence is that of ATP-dependent dethiobiotin synthetase BioD from Chlamydia pneumoniae (Chlamydophila pneumoniae).